A 541-amino-acid chain; its full sequence is Peptidyl-alpha-hydroxyglycine alpha-amidating lyase 1 (541 aa).

The first 33 residues, 1–33 (MKSTDSAKCLGSKSLAICCLLLHLLLCIRPAVS), serve as a signal peptide directing secretion. The Extracellular portion of the chain corresponds to 34–458 (QTQSPQRYLH…VAVHHPSGKA (425 aa)). Residue Asn-92 is glycosylated (N-linked (GlcNAc...) asparagine). NHL repeat units follow at residues 164 to 205 (GKVQ…FPPR), 215 to 258 (LGDA…YSRK), and 272 to 314 (GISY…FLSS). 2 cysteine pairs are disulfide-bonded: Cys-228/Cys-248 and Cys-299/Cys-310. Asn-315 is a glycosylation site (N-linked (GlcNAc...) asparagine). Residues 374–418 (KQLVSKFGPNNLQFQNPHDVAVTADGNEIYVAELNPMRIHKFVHR) form an NHL 4 repeat. The chain crosses the membrane as a helical span at residues 459-479 (ILVASLMLLFAGSTFALALIF). The Cytoplasmic segment spans residues 480–541 (ARRRKRGCLP…TKTLASAQYA (62 aa)). The tract at residues 521-541 (LDQQASDEEQETKTLASAQYA) is disordered.

The protein belongs to the peptidyl-alpha-hydroxyglycine alpha-amidating lyase family. The cofactor is Zn(2+). In terms of processing, N-glycosylated. In terms of tissue distribution, widely expressed. In mature larvae, it is ubiquitously expressed with a low expression in all cells and a stronger expression in a subset of neurons. Colocalizes with neuropeptide proctolin. In adults, weak expression is observed in most neuronal cell bodies and in scattered large cells throughout the protocerebrum and also in the subesophageal neuromeres (at protein level).

It localises to the cell membrane. It carries out the reaction a [peptide]-C-terminal (2S)-2-hydroxyglycine = a [peptide]-C-terminal amide + glyoxylate. Its function is as follows. Peptidyl-alpha-hydroxylglycine alpha-amidating lyase that catalyzes an essential reaction in C-terminal alpha-amidation of peptides. Mediates the dismutation of the unstable peptidyl(2-hydroxyglycine) intermediate to glyoxylate and the corresponding desglycine peptide amide. C-terminal amidation of peptides such as neuropeptides is essential for full biological activity. This Drosophila melanogaster (Fruit fly) protein is Peptidyl-alpha-hydroxyglycine alpha-amidating lyase 1 (Pal1).